The chain runs to 93 residues: U12-lycotoxin-Ls1a (93 aa).

The signal sequence occupies residues 1-18; the sequence is MKFAVILLFSLVVLTVAS. Residues 19–38 constitute a propeptide that is removed on maturation; that stretch reads ESVEEVRREIDIEDLPEQQR.

It belongs to the neurotoxin 31 family. In terms of processing, contains 5 disulfide bonds. Expressed by the venom gland.

The protein localises to the secreted. The chain is U12-lycotoxin-Ls1a from Lycosa singoriensis (Wolf spider).